A 646-amino-acid chain; its full sequence is P-selectin (646 aa).

The N-terminal stretch at 1 to 41 (MASCPKAIWNWRFQRAVFRTVQLLCFSVLIFEVINQKEVSA) is a signal peptide. At 42–587 (WTYHYSNKTY…QAGPLTIQET (546 aa)) the chain is on the extracellular side. N-linked (GlcNAc...) asparagine glycans are attached at residues asparagine 48, asparagine 54, and asparagine 80. One can recognise a C-type lectin domain in the interval 58 to 158 (AFCQKYYTDL…PCWKRKRALC (101 aa)). Cystine bridges form between cysteine 60–cysteine 158, cysteine 131–cysteine 150, cysteine 163–cysteine 174, cysteine 168–cysteine 183, cysteine 185–cysteine 194, cysteine 200–cysteine 244, cysteine 230–cysteine 257, cysteine 262–cysteine 306, cysteine 292–cysteine 319, cysteine 324–cysteine 368, cysteine 354–cysteine 381, cysteine 386–cysteine 430, cysteine 416–cysteine 443, cysteine 458–cysteine 502, cysteine 488–cysteine 515, cysteine 520–cysteine 564, and cysteine 550–cysteine 577. Glutamate 121, asparagine 123, and asparagine 124 together coordinate Ca(2+). Asparagine 123 lines the a carbohydrate pocket. Glutamate 133 and asparagine 146 together coordinate a carbohydrate. Ca(2+)-binding residues include asparagine 146 and aspartate 147. The EGF-like domain maps to 159–195 (YRASCQDMSCSKQGECIETIGNYTCSCYPGFYGPECE). Asparagine 180 carries N-linked (GlcNAc...) asparagine glycosylation. 6 Sushi domains span residues 198–259 (RECG…QCVA), 260–321 (VQCP…VCKA), 322–383 (LQCQ…ECQA), 384–445 (VTCA…TCEE), 456–517 (VQCP…TCRA), and 518–579 (VKCA…TCQA). Residues asparagine 212 and asparagine 219 are each glycosylated (N-linked (GlcNAc...) asparagine). Asparagine 336 carries an N-linked (GlcNAc...) asparagine glycan. N-linked (GlcNAc...) asparagine glycosylation is present at asparagine 481. N-linked (GlcNAc...) asparagine glycosylation is found at asparagine 532, asparagine 539, and asparagine 557. The helical transmembrane segment at 588–611 (LTYVGGAAAGTTGLVTGSILLALL) threads the bilayer. Over 612–646 (RRRCRQKDDGKSPLNPQSHLGTYGVFTNAAFDPSP) the chain is Cytoplasmic. Positions 634–637 (YGVF) match the Endocytosis signal motif. Residues 637 to 646 (FTNAAFDPSP) form an interaction with SNX17 region.

This sequence belongs to the selectin/LECAM family. Interacts with SNX17. Interacts with SELPLG/PSGL1 and PODXL2 and mediates neutrophil adhesion and leukocyte rolling. This interaction requires the sialyl-Lewis X epitope of SELPLG and PODXL2, and specific tyrosine sulfation on SELPLG. Interacts (via C-type lectin domain) with alpha-IIb/beta3 integrin ITGA2B:ITGB3 and alpha-V/beta-3 integrin ITGAV:ITGB3. Interacts with alpha5/beta1 integrin ITGA5:ITGB1 and alpha4/beta1 integrin ITGA4:ITGB. In terms of tissue distribution, stored in the alpha-granules of platelets and Weibel-Palade bodies of endothelial cells. Upon cell activation by agonists, P-selectin is transported rapidly to the cell surface.

It is found in the cell membrane. In terms of biological role, ca(2+)-dependent receptor for myeloid cells that binds to carbohydrates on neutrophils and monocytes. Mediates the interaction of activated endothelial cells or platelets with leukocytes. The ligand recognized is sialyl-Lewis X. Mediates rapid rolling of leukocyte rolling over vascular surfaces during the initial steps in inflammation through interaction with SELPLG. Mediates cell-cell interactions and cell adhesion via the interaction with integrin alpha-IIb/beta3 (ITGA2B:ITGB3) and integrin alpha-V/beta-3 (ITGAV:ITGB3). This chain is P-selectin (SELP), found in Bos taurus (Bovine).